A 98-amino-acid chain; its full sequence is DNA-binding protein Fis (98 aa).

Positions 74 to 93 (QTRAALMMGINRGTLRKKLK) form a DNA-binding region, H-T-H motif.

This sequence belongs to the transcriptional regulatory Fis family. In terms of assembly, homodimer.

In terms of biological role, activates ribosomal RNA transcription. Plays a direct role in upstream activation of rRNA promoters. This chain is DNA-binding protein Fis, found in Photorhabdus laumondii subsp. laumondii (strain DSM 15139 / CIP 105565 / TT01) (Photorhabdus luminescens subsp. laumondii).